A 269-amino-acid polypeptide reads, in one-letter code: Aquaporin-1 (269 aa).

Residues 1–11 (MASEIKKKLFW) are Cytoplasmic-facing. A helical membrane pass occupies residues 12-29 (RAVVAEFLAMTLFVFISI). Residues 30–46 (GSALGFNYPLERNQTLV) lie on the Extracellular side of the membrane. The chain crosses the membrane as a helical span at residues 47–65 (QDNVKVSLAFGLSIATLAQ). Over 66-68 (SVG) the chain is Cytoplasmic. The stretch at 69 to 82 (HISGAHLNPAVTLG) is an intramembrane region. Residues 76–78 (NPA) carry the NPA 1 motif. The Cytoplasmic portion of the chain corresponds to 83 to 90 (LLLSCQIS). The chain crosses the membrane as a helical span at residues 91–109 (ILRAVMYIIAQCVGAIVAT). Residues 110 to 133 (AILSGITSSLVDNSLGRNDLAHGV) lie on the Extracellular side of the membrane. The chain crosses the membrane as a helical span at residues 134–153 (NSGQGLGIEIIGTLQLVLCV). The Cytoplasmic portion of the chain corresponds to 154 to 163 (LATTDRRRRD). The chain crosses the membrane as a helical span at residues 164 to 181 (LGGSAPLAIGLSVALGHL). The Extracellular portion of the chain corresponds to 182 to 186 (LAIDY). Residues 187 to 199 (TGCGINPARSFGS) lie within the membrane without spanning it. The NPA 2 motif lies at 192–194 (NPA). Over 200–206 (AVLTRNF) the chain is Extracellular. N205 is a glycosylation site (N-linked (GlcNAc...) asparagine). A helical membrane pass occupies residues 207–224 (SNHWIFWVGPFIGGALAV). At 225-269 (LIYDFILAPRSSDFTDRMKVWTSGQVEEYDLDADDINSRVEMKPK) the chain is on the cytoplasmic side. A Phosphoserine modification is found at S247. Y253 carries the post-translational modification Phosphotyrosine. At S262 the chain carries Phosphoserine.

Belongs to the MIP/aquaporin (TC 1.A.8) family. Homotetramer; each monomer provides an independent water pore. Component of the ankyrin-1 complex in the erythrocyte, composed of ANK1, RHCE, RHAG, SLC4A1, EPB42, GYPA, GYPB and AQP1. Interacts with EPHB2; involved in endolymph production in the inner ear. Identified in a complex with STOM. Interacts (via the N-terminal) with ANK1 (via ANK 1-5 repeats). Interacts (via the C-terminal) with EPB42. Detected in erythrocytes (at protein level). In the kidney, expressed on luminal and basal borders of proximal tubules and in the thin limb of Henle's loop (at protein level).

Its subcellular location is the cell membrane. The enzyme catalyses H2O(in) = H2O(out). The catalysed reaction is nitric oxide(out) = nitric oxide(in). It catalyses the reaction CO2(out) = CO2(in). It carries out the reaction glycerol(in) = glycerol(out). The enzyme catalyses H2O2(out) = H2O2(in). The catalysed reaction is K(+)(in) = K(+)(out). It catalyses the reaction Na(+)(in) = Na(+)(out). Forms a water channel that facilitates the transport of water across cell membranes, playing a crucial role in water homeostasis in various tissues. Could also be permeable to small solutes including hydrogen peroxide, glycerol and gases such as amonnia (NH3), nitric oxide (NO) and carbon dioxide (CO2). Recruited to the ankyrin-1 complex, a multiprotein complex of the erythrocyte membrane, it could be part of a CO2 metabolon, linking facilitated diffusion of CO2 across the membrane, anion exchange of Cl(-)/HCO3(-) and interconversion of dissolved CO2 and carbonic acid in the cytosol. In vitro, it shows non-selective gated cation channel activity and may be permeable to cations like K(+) and Na(+) in vivo. This is Aquaporin-1 from Mus musculus (Mouse).